Here is a 373-residue protein sequence, read N- to C-terminus: Chaperone protein DnaJ (373 aa).

The J domain occupies 5-71 (DYYEILGVSR…EKRAMYDKFG (67 aa)). The CR-type zinc finger occupies 144–226 (GVKIPLEYDR…CGGTGRIRKR (83 aa)). Zn(2+)-binding residues include cysteine 157, cysteine 160, cysteine 174, cysteine 177, cysteine 200, cysteine 203, cysteine 214, and cysteine 217. CXXCXGXG motif repeat units lie at residues 157–164 (CEHCHGEG), 174–181 (CPKCHGTG), 200–207 (CNQCGGTG), and 214–221 (CRVCGGTG).

This sequence belongs to the DnaJ family. As to quaternary structure, homodimer. Zn(2+) is required as a cofactor.

Its subcellular location is the cytoplasm. Participates actively in the response to hyperosmotic and heat shock by preventing the aggregation of stress-denatured proteins and by disaggregating proteins, also in an autonomous, DnaK-independent fashion. Unfolded proteins bind initially to DnaJ; upon interaction with the DnaJ-bound protein, DnaK hydrolyzes its bound ATP, resulting in the formation of a stable complex. GrpE releases ADP from DnaK; ATP binding to DnaK triggers the release of the substrate protein, thus completing the reaction cycle. Several rounds of ATP-dependent interactions between DnaJ, DnaK and GrpE are required for fully efficient folding. Also involved, together with DnaK and GrpE, in the DNA replication of plasmids through activation of initiation proteins. The chain is Chaperone protein DnaJ from Thermosipho melanesiensis (strain DSM 12029 / CIP 104789 / BI429).